We begin with the raw amino-acid sequence, 363 residues long: MLACNDDTSLYLLVKQVTKKEIYSNDLENGNVKRGASTHSLYLIGDPKFCRNNSSKQKSIIILCGPTASGKSYLGHELAKAYNGEIINIDSMQVYKEIPIITASPPKSYKTEILYHLYNFLSMTEDFSVIKYLKLATEKIKEITDRGKLPILIGGTGLYINSLVFGYNNIPDISEDLQAQVRNLHVKIGNIELWGKLEKFDPLAASKINQNDTQRLIRAYEVFMQTGKSIFSFQTLPKEQILSDFNCKIIFLNPERKFLYKTCDERLDKIFKEGAIDEIALIKKQFAPKDYTNLKAVGIKEILAYLNGNLTLDEALNAAQIRTRQYAKRQVTWFKNQIQDKITLEYANQEEFTQTLKNSFKTI.

65–72 (GPTASGKS) lines the ATP pocket. Position 67–72 (67–72 (TASGKS)) interacts with substrate. Interaction with substrate tRNA regions lie at residues 90 to 93 (DSMQ) and 214 to 218 (QRLIR).

This sequence belongs to the IPP transferase family. Monomer. Mg(2+) serves as cofactor.

The enzyme catalyses adenosine(37) in tRNA + dimethylallyl diphosphate = N(6)-dimethylallyladenosine(37) in tRNA + diphosphate. In terms of biological role, catalyzes the transfer of a dimethylallyl group onto the adenine at position 37 in tRNAs that read codons beginning with uridine, leading to the formation of N6-(dimethylallyl)adenosine (i(6)A). In Rickettsia rickettsii (strain Sheila Smith), this protein is tRNA dimethylallyltransferase.